A 216-amino-acid polypeptide reads, in one-letter code: Transmembrane protein 163a (216 aa).

At 1-15 (MRLKPHEAQSYRKKA) the chain is on the cytoplasmic side. The chain crosses the membrane as a helical span at residues 16–36 (LWVSWISIVVTLILAVAGFTV). The Extracellular segment spans residues 37-43 (SFMRHSA). A helical transmembrane segment spans residues 44 to 64 (SAFGFAFDATLDVLSSIIVLW). Residues 65 to 77 (RYSNAAAVHSAHR) lie on the Cytoplasmic side of the membrane. A helical membrane pass occupies residues 78–98 (EYIACVILGVIFILSSLCILG). The Extracellular segment spans residues 99–114 (KAIHDLATKLLPEVDD). The chain crosses the membrane as a helical span at residues 115–135 (FLFSVSIVSGLMCVILAVAKF). Over 136–144 (MLGRILTSR) the chain is Cytoplasmic. The helical transmembrane segment at 145–165 (ALITDGFNSMVGGIMGFSILI) threads the bilayer. Residues 166-182 (SAEVFRHYPNVWYLDGT) lie on the Extracellular side of the membrane. A helical membrane pass occupies residues 183–203 (IGILIGLVIQAYGVKLLVDMI). Residues 204–216 (PRVRQTRNYERFE) lie on the Cytoplasmic side of the membrane.

It belongs to the TMEM163 family.

It is found in the cytoplasmic vesicle. It localises to the secretory vesicle. Its subcellular location is the synaptic vesicle membrane. The protein resides in the early endosome membrane. The protein localises to the late endosome membrane. It is found in the lysosome membrane. It localises to the cell membrane. It catalyses the reaction Zn(2+)(in) = Zn(2+)(out). Functionally, zinc ion transporter that mediates zinc efflux and plays a crucial role in intracellular zinc homeostasis. Binds the divalent cations Zn(2+), Ni(2+), and to a minor extent Cu(2+). Is a functional modulator of P2X purinoceptors, including P2RX1, P2RX3, P2RX4 and P2RX7. Plays a role in central nervous system development and is required for myelination, and survival and proliferation of oligodendrocytes. This is Transmembrane protein 163a from Danio rerio (Zebrafish).